The primary structure comprises 452 residues: Tryptophan biosynthesis protein TrpCF (452 aa).

Positions 1–256 (MQTVLAKIVA…AAVRRVLLGE (256 aa)) are indole-3-glycerol phosphate synthase. The interval 257–452 (NKVCGLTRAQ…ASVFQTLRAY (196 aa)) is N-(5'-phosphoribosyl)anthranilate isomerase.

In the N-terminal section; belongs to the TrpC family. It in the C-terminal section; belongs to the TrpF family. Monomer.

It catalyses the reaction N-(5-phospho-beta-D-ribosyl)anthranilate = 1-(2-carboxyphenylamino)-1-deoxy-D-ribulose 5-phosphate. The catalysed reaction is 1-(2-carboxyphenylamino)-1-deoxy-D-ribulose 5-phosphate + H(+) = (1S,2R)-1-C-(indol-3-yl)glycerol 3-phosphate + CO2 + H2O. It functions in the pathway amino-acid biosynthesis; L-tryptophan biosynthesis; L-tryptophan from chorismate: step 3/5. It participates in amino-acid biosynthesis; L-tryptophan biosynthesis; L-tryptophan from chorismate: step 4/5. Functionally, bifunctional enzyme that catalyzes two sequential steps of tryptophan biosynthetic pathway. The first reaction is catalyzed by the isomerase, coded by the TrpF domain; the second reaction is catalyzed by the synthase, coded by the TrpC domain. The protein is Tryptophan biosynthesis protein TrpCF (trpC) of Salmonella typhi.